Consider the following 324-residue polypeptide: Putative GTPase PYRAB02490 (324 aa).

Residues G52 to T60, D194, and V229 to T231 each bind GTP.

The protein belongs to the SIMIBI class G3E GTPase family. ArgK/MeaB subfamily.

Its function is as follows. May have GTPase activity. May also bind and hydrolyze ATP. May function as chaperone. The protein is Putative GTPase PYRAB02490 of Pyrococcus abyssi (strain GE5 / Orsay).